Reading from the N-terminus, the 23-residue chain is Potassium channel toxin alpha-KTx 13.4 (23 aa).

3 disulfide bridges follow: Cys2/Cys15, Cys5/Cys20, and Cys9/Cys22. The interaction with Ca(2+)-activated K(+) channels stretch occupies residues 13 to 20 (GKCINGKC). A Tyrosine amide modification is found at Tyr23.

In terms of tissue distribution, expressed by the venom gland.

It localises to the secreted. In terms of biological role, blocks the potassium channel Shaker B. This chain is Potassium channel toxin alpha-KTx 13.4, found in Tityus stigmurus (Brazilian scorpion).